We begin with the raw amino-acid sequence, 154 residues long: 17 kDa surface antigen (154 aa).

The N-terminal stretch at 1–19 (MKLLSKIMIIALAASMLQA) is a signal peptide. Residue Cys-20 is the site of N-palmitoyl cysteine attachment. Cys-20 carries S-diacylglycerol cysteine lipidation.

It belongs to the rickettsiale 17 kDa surface antigen family.

It localises to the cell outer membrane. The sequence is that of 17 kDa surface antigen (omp) from Rickettsia montanensis.